We begin with the raw amino-acid sequence, 542 residues long: Probable quinate permease (542 aa).

Residues 1-22 (MSILALVEDRPTPKEVYNWKIY) lie on the Cytoplasmic side of the membrane. A helical membrane pass occupies residues 23–43 (LLAAVASFTSCMIGYDSAFIG). Topologically, residues 44–74 (TTLALSSFREEFGFSTMSKTAVNLVSANIVS) are extracellular. The helical transmembrane segment at 75-95 (CYQAGAFFGAFFAYPIGHFWG) threads the bilayer. Residues 96–97 (RK) lie on the Cytoplasmic side of the membrane. Residues 98 to 118 (WGLLFAGTIFTLGAGLMLGAN) form a helical membrane-spanning segment. The Extracellular portion of the chain corresponds to 119 to 130 (GDRGLGLLYGGR). Residues 131–151 (VLAGLGVGAGSNITPIYISEM) form a helical membrane-spanning segment. The Cytoplasmic segment spans residues 152–159 (APPSIRGR). A helical membrane pass occupies residues 160–180 (LVGVYELGWQIGGLVGFWINY). Residues 181 to 193 (GVSETLAPSHKQW) lie on the Extracellular side of the membrane. A helical transmembrane segment spans residues 194–214 (IIPFAVQLIPSGLLLIGAVFL). Topologically, residues 215 to 285 (KESPRWLFSR…AGTNKKVMYR (71 aa)) are cytoplasmic. A helical membrane pass occupies residues 286 to 306 (LFLGSMLFFWQNGSGINAINY). Topologically, residues 307 to 325 (YSPTVFKSIGLHGANTSMF) are extracellular. A helical membrane pass occupies residues 326 to 346 (STGIFGVVKTVVTFVWLLYLI). The Cytoplasmic portion of the chain corresponds to 347 to 352 (DRVGRR). Residues 353–373 (LLLLIGAAGAAVCLLIVGAYI) form a helical membrane-spanning segment. Topologically, residues 374-387 (KIADPASNPTQEMT) are extracellular. A helical transmembrane segment spans residues 388–408 (GGGIAAMFFFYLYTVFYTPSW). The Cytoplasmic portion of the chain corresponds to 409-456 (NGTPWVMNSEMFEPNMRSLAQACAAASNWLWNFLISRFTPQMFAKMEY). The chain crosses the membrane as a helical span at residues 457–477 (GVWFFFASLMLLSIVFVFFLV). Over 478–542 (PETKGIPLES…EHVSEDLPKV (65 aa)) the chain is Extracellular. A disordered region spans residues 523–542 (GYSKTGEQQVEHVSEDLPKV). The span at 531–542 (QVEHVSEDLPKV) shows a compositional bias: basic and acidic residues.

Belongs to the major facilitator superfamily. Sugar transporter (TC 2.A.1.1) family. In terms of assembly, interacts with creB. In terms of processing, ubiquitinated. Deubiquitinated by creB, probably to control its activity or amount.

It localises to the cell membrane. In terms of biological role, integral membrane transporter that imports quinic acid to be catabolized as a carbon source. The chain is Probable quinate permease (qutD) from Aspergillus fumigatus (strain ATCC MYA-4609 / CBS 101355 / FGSC A1100 / Af293) (Neosartorya fumigata).